The sequence spans 316 residues: Large ribosomal subunit protein uL10 (316 aa).

The interval 289–316 (AAAAAPAKEAPKEESEESDEDMGFGLFD) is disordered.

The protein belongs to the universal ribosomal protein uL10 family. As to quaternary structure, P0 forms a pentameric complex by interaction with dimers of P1 and P2. Post-translationally, phosphorylated.

The protein localises to the nucleus. Its subcellular location is the cytoplasm. Functionally, ribosomal protein P0 is the functional equivalent of E.coli protein L10. This chain is Large ribosomal subunit protein uL10 (RPLP0), found in Gallus gallus (Chicken).